The chain runs to 180 residues: Nudix hydrolase 16, mitochondrial (180 aa).

The Nudix hydrolase domain occupies 18-162 (GSRLVAGCIP…WMKDALVEGF (145 aa)). Substrate is bound at residue Phe-60. Mn(2+) contacts are provided by Gly-63, Glu-78, Glu-82, and Glu-144. Residues 63 to 84 (GGWENDETVREAAAREAVEEAG) carry the Nudix box motif.

The protein belongs to the Nudix hydrolase family. The cofactor is Mg(2+). It depends on Mn(2+) as a cofactor. In terms of tissue distribution, expressed in roots, leaves, stems and inflorescences.

It localises to the mitochondrion. In terms of biological role, probably mediates the hydrolysis of some nucleoside diphosphate derivatives. This chain is Nudix hydrolase 16, mitochondrial (NUDT16), found in Arabidopsis thaliana (Mouse-ear cress).